A 383-amino-acid chain; its full sequence is Neuropeptide Y receptor type 1 (383 aa).

Over 1–44 (MNSTSFSQVENHSIYYNFSEKNSRFLAFENDDCHLPLAMIFTLA) the chain is Extracellular. 3 N-linked (GlcNAc...) asparagine glycosylation sites follow: N2, N11, and N17. The helical transmembrane segment at 45-65 (LAYGAVIILGVSGNLALIIII) threads the bilayer. Residues 66–76 (LKQKEMRNVTN) are Cytoplasmic-facing. The helical transmembrane segment at 77-97 (ILIVNLSFSDLLVAIMCLPFT) threads the bilayer. Residues 98 to 116 (FVYTLMDHWVFGEAMCKLN) are Extracellular-facing. C113 and C198 are disulfide-bonded. The helical transmembrane segment at 117-137 (PFVQCVSITVSIFSLVLIAVE) threads the bilayer. The Cytoplasmic portion of the chain corresponds to 138–154 (RHQLIINPRGWRPNNRH). A helical transmembrane segment spans residues 155–175 (AYVGIAVIWVLAVASSLPFLI). Residues 176–211 (YQVLTDEPFQNVTLDAFKDKYVCFDKFPSDSHRLSY) lie on the Extracellular side of the membrane. A glycan (N-linked (GlcNAc...) asparagine) is linked at N186. The helical transmembrane segment at 212 to 232 (TTLLLVLQYFGPLCFIFICYF) threads the bilayer. The Cytoplasmic segment spans residues 233–260 (KIYVRLKRRNSMMDKMRDNKYRSSEAKR). The helical transmembrane segment at 261–281 (INIMLLSIVVAFAVCWLPLTI) threads the bilayer. Residues 282-299 (FNTVFDWDHQIIATCNHN) lie on the Extracellular side of the membrane. Residues 300–320 (LLFLLCHLTAMISTCVNPIFY) traverse the membrane as a helical segment. Over 321–383 (GFLNKNFQRD…KIHTDDNEKI (63 aa)) the chain is Cytoplasmic. Residue C338 is the site of S-palmitoyl cysteine attachment. Residue S368 is modified to Phosphoserine.

Belongs to the G-protein coupled receptor 1 family.

The protein localises to the cell membrane. In terms of biological role, receptor for neuropeptide Y and peptide YY. In Bos taurus (Bovine), this protein is Neuropeptide Y receptor type 1 (NPY1R).